We begin with the raw amino-acid sequence, 434 residues long: Peptidase B (434 aa).

Positions 198 and 203 each coordinate Mn(2+). Lys210 is a catalytic residue. Asp221, Asp280, and Glu282 together coordinate Mn(2+). Arg284 is a catalytic residue.

Belongs to the peptidase M17 family. As to quaternary structure, homohexamer. The cofactor is Mn(2+).

The protein resides in the cytoplasm. It carries out the reaction Release of an N-terminal amino acid, Xaa, from a peptide or arylamide. Xaa is preferably Glu or Asp but may be other amino acids, including Leu, Met, His, Cys and Gln.. In terms of biological role, probably plays an important role in intracellular peptide degradation. This is Peptidase B from Pasteurella multocida (strain Pm70).